The sequence spans 73 residues: U-scoloptoxin(03)-Ssd1b (73 aa).

Positions 1–23 (MKSSMAVLLVMGLIIFTLDKCYS) are cleaved as a signal peptide.

Post-translationally, contains 3 disulfide bonds. As to expression, expressed by the venom gland.

The protein resides in the secreted. The protein is U-scoloptoxin(03)-Ssd1b of Scolopendra dehaani (Thai centipede).